Reading from the N-terminus, the 914-residue chain is Sensor protein TorS (914 aa).

The Cytoplasmic segment spans residues 1 to 8 (MNLTLTRR). Residues 9-29 (LWMGFALMALLTLTSTLVGWY) form a helical membrane-spanning segment. The Periplasmic portion of the chain corresponds to 30–332 (NLRFISQVEK…EKASARGQYS (303 aa)). The helical transmembrane segment at 333–353 (LLLLGMVSLCALILILWRVVY) threads the bilayer. The region spanning 354–407 (RSVTRPLAEQTQALQRLLDGDIDSPFPETAGVRELDTIGRLMDAFRSNVHALNR) is the HAMP domain. Over 354 to 914 (RSVTRPLAEQ…WLHKKDLNAI (561 aa)) the chain is Cytoplasmic. The region spanning 450–664 (AMSHEIRTPL…CFCLRLPLRV (215 aa)) is the Histidine kinase domain. His-453 carries the post-translational modification Phosphohistidine; by autocatalysis. Residues 683–798 (RLLLIEDNPL…VLGQLLAHYL (116 aa)) form the Response regulatory domain. Asp-733 carries the 4-aspartylphosphate modification. The HPt domain maps to 821–914 (GTEKIHEWLV…WLHKKDLNAI (94 aa)). Position 860 is a phosphohistidine (His-860).

In terms of assembly, may form homomultimers. Seems to interact with TorT and TorC apocytochrome. In terms of processing, activation requires a sequential transfer of a phosphate group from a His in the primary transmitter domain, to an Asp in the receiver domain and to a His in the secondary transmitter domain.

It localises to the cell inner membrane. It catalyses the reaction ATP + protein L-histidine = ADP + protein N-phospho-L-histidine.. With respect to regulation, inhibited by TorC apocytochrome. Member of the two-component regulatory system TorS/TorR involved in the anaerobic utilization of trimethylamine-N-oxide (TMAO). Detects the presence of TMAO in the medium and, in response, activates TorR via a four-step phosphorelay. When TMAO is removed, TorS can dephosphorylate TorR, probably by a reverse phosphorelay involving His-860 and Asp-733. This is Sensor protein TorS (torS) from Escherichia coli (strain K12).